The sequence spans 802 residues: Lon protease (802 aa).

The Lon N-terminal domain occupies 17 to 211 (SIVMPLFEVV…LFLHILTKHK (195 aa)). 363–370 (GPPGTGKT) contributes to the ATP binding site. A Lon proteolytic domain is found at 600–780 (ENVPGVVTGL…EEVLREALDI (181 aa)). Active-site residues include S686 and K729.

The protein belongs to the peptidase S16 family. As to quaternary structure, homohexamer. Organized in a ring with a central cavity.

The protein localises to the cytoplasm. The catalysed reaction is Hydrolysis of proteins in presence of ATP.. In terms of biological role, ATP-dependent serine protease that mediates the selective degradation of mutant and abnormal proteins as well as certain short-lived regulatory proteins. Required for cellular homeostasis and for survival from DNA damage and developmental changes induced by stress. Degrades polypeptides processively to yield small peptide fragments that are 5 to 10 amino acids long. Binds to DNA in a double-stranded, site-specific manner. The polypeptide is Lon protease (Methanosarcina barkeri (strain Fusaro / DSM 804)).